Reading from the N-terminus, the 327-residue chain is Annexin A8 (327 aa).

4 Annexin repeats span residues 21-92, 93-164, 177-249, and 253-324; these read FNPD…ALMY, PPYR…CLLQ, GLAL…TVVK, and NVHS…NLVG. 4 residues coordinate Ca(2+): Met-266, Gly-268, Gly-270, and Asp-310.

The protein belongs to the annexin family.

In terms of biological role, this protein is an anticoagulant protein that acts as an indirect inhibitor of the thromboplastin-specific complex, which is involved in the blood coagulation cascade. This Rattus norvegicus (Rat) protein is Annexin A8 (Anxa8).